Here is a 425-residue protein sequence, read N- to C-terminus: Serine--tRNA ligase (425 aa).

Threonine 232–glutamate 234 contacts L-serine. Residues arginine 263–glutamate 265 and valine 279 each bind ATP. Glutamate 286 is a binding site for L-serine. Glutamate 350 to serine 353 provides a ligand contact to ATP. Threonine 387 serves as a coordination point for L-serine.

It belongs to the class-II aminoacyl-tRNA synthetase family. Type-1 seryl-tRNA synthetase subfamily. Homodimer. The tRNA molecule binds across the dimer.

It is found in the cytoplasm. The catalysed reaction is tRNA(Ser) + L-serine + ATP = L-seryl-tRNA(Ser) + AMP + diphosphate + H(+). It carries out the reaction tRNA(Sec) + L-serine + ATP = L-seryl-tRNA(Sec) + AMP + diphosphate + H(+). The protein operates within aminoacyl-tRNA biosynthesis; selenocysteinyl-tRNA(Sec) biosynthesis; L-seryl-tRNA(Sec) from L-serine and tRNA(Sec): step 1/1. In terms of biological role, catalyzes the attachment of serine to tRNA(Ser). Is also able to aminoacylate tRNA(Sec) with serine, to form the misacylated tRNA L-seryl-tRNA(Sec), which will be further converted into selenocysteinyl-tRNA(Sec). The sequence is that of Serine--tRNA ligase from Methanocorpusculum labreanum (strain ATCC 43576 / DSM 4855 / Z).